We begin with the raw amino-acid sequence, 26 residues long: DEAD-box ATP-dependent RNA helicase 1 (26 aa).

Residues 1–10 (RELLMGIFEK) carry the Q motif motif. 11 to 16 (NGTGKT) is an ATP binding site. Residues 11–26 (NGTGKTAAFVIPLLQK) form the Helicase ATP-binding domain.

It belongs to the DEAD box helicase family. DDX6/DHH1 subfamily.

The protein localises to the cytoplasm. The protein resides in the P-body. The catalysed reaction is ATP + H2O = ADP + phosphate + H(+). Its function is as follows. ATP-dependent RNA helicase involved in mRNA turnover, and more specifically in mRNA decapping. The chain is DEAD-box ATP-dependent RNA helicase 1 from Catharanthus roseus (Madagascar periwinkle).